The sequence spans 131 residues: UPF0102 protein YraN (131 aa).

Over residues 1–19 the composition is skewed to polar residues; sequence MATVPTRSGSPRQLTTKQT. A disordered region spans residues 1 to 21; it reads MATVPTRSGSPRQLTTKQTGD.

This sequence belongs to the UPF0102 family.

This is UPF0102 protein YraN from Escherichia coli (strain K12 / MC4100 / BW2952).